The following is a 431-amino-acid chain: ORC1-type DNA replication protein 14 (431 aa).

ATP contacts are provided by residues 62–66, Tyr-219, and Arg-231; that span reads TGKSL.

It belongs to the CDC6/cdc18 family.

Functionally, involved in regulation of DNA replication. This chain is ORC1-type DNA replication protein 14 (cdc6n), found in Haloarcula marismortui (strain ATCC 43049 / DSM 3752 / JCM 8966 / VKM B-1809) (Halobacterium marismortui).